Here is a 91-residue protein sequence, read N- to C-terminus: Acyl carrier protein AsbD (91 aa).

The Carrier domain maps to 4-82; it reads EALKNAVLKI…SLLDFMEELQ (79 aa). Ser-40 carries the O-(pantetheine 4'-phosphoryl)serine modification.

It belongs to the acyl carrier protein (ACP) family. In terms of processing, activated by the transfer of a 4'-phosphopantetheine group from CoA to Ser-40.

It functions in the pathway siderophore biosynthesis; petrobactin biosynthesis. Involved in the biosynthesis of petrobactin, a catecholate siderophore that functions in both iron acquisition and virulence. Aryl-carrier protein that activates 3,4-dihydroxybenzoate (3,4-DHBA) prior to its incorporation into petrobactin. This chain is Acyl carrier protein AsbD, found in Bacillus anthracis.